A 919-amino-acid chain; its full sequence is Probable dipeptidyl-aminopeptidase B (919 aa).

The segment covering 1 to 10 has biased composition (basic and acidic residues); sequence MRRSDGHEET. The segment at 1-53 is disordered; that stretch reads MRRSDGHEETSEFLPMTHSRSVSAASQTSTDSSLSTESLFPREQKPFPNAMGG. The Cytoplasmic segment spans residues 1 to 92; it reads MRRSDGHEET…AATGGGRARR (92 aa). A compositionally biased stretch (low complexity) spans 21-38; that stretch reads SVSAASQTSTDSSLSTES. Residues 93–113 traverse the membrane as a helical; Signal-anchor for type II membrane protein segment; it reads IFWILVLLCLGGWLLAFVLFL. Topologically, residues 114–919 are vacuolar; sequence TGGRANYQTA…MKRSLRLLSP (806 aa). N200, N352, and N643 each carry an N-linked (GlcNAc...) asparagine glycan. The active-site Charge relay system is the S757. N811 is a glycosylation site (N-linked (GlcNAc...) asparagine). Active-site charge relay system residues include D834 and H867.

Belongs to the peptidase S9B family.

It is found in the vacuole membrane. The catalysed reaction is Release of an N-terminal dipeptide, Xaa-Yaa-|-Zaa-, from a polypeptide, preferentially when Yaa is Pro, provided Zaa is neither Pro nor hydroxyproline.. Type IV dipeptidyl-peptidase which removes N-terminal dipeptides sequentially from polypeptides having unsubstituted N-termini provided that the penultimate residue is proline. This is Probable dipeptidyl-aminopeptidase B (dapB) from Aspergillus fumigatus (strain CBS 144.89 / FGSC A1163 / CEA10) (Neosartorya fumigata).